The following is a 131-amino-acid chain: Large ribosomal subunit protein bL19 (131 aa).

Belongs to the bacterial ribosomal protein bL19 family.

This protein is located at the 30S-50S ribosomal subunit interface and may play a role in the structure and function of the aminoacyl-tRNA binding site. The chain is Large ribosomal subunit protein bL19 from Synechococcus sp. (strain CC9902).